The following is a 163-amino-acid chain: Urease accessory protein UreE (163 aa).

A disordered region spans residues 134-163; that stretch reads EAGAYGGGHRHHHDDDAPSIRQPARLRIHE.

This sequence belongs to the UreE family.

Its subcellular location is the cytoplasm. Involved in urease metallocenter assembly. Binds nickel. Probably functions as a nickel donor during metallocenter assembly. In Methylobacillus flagellatus (strain ATCC 51484 / DSM 6875 / VKM B-1610 / KT), this protein is Urease accessory protein UreE.